Consider the following 124-residue polypeptide: NAD(P)H-quinone oxidoreductase subunit 5, chloroplastic (124 aa).

A run of 3 helical transmembrane segments spans residues 22–42, 44–64, and 91–111; these read TPIS…FLVA, LLPL…IGII, and LGYM…FHLI.

It belongs to the complex I subunit 5 family. In terms of assembly, NDH is composed of at least 16 different subunits, 5 of which are encoded in the nucleus.

It localises to the plastid. The protein localises to the chloroplast thylakoid membrane. The catalysed reaction is a plastoquinone + NADH + (n+1) H(+)(in) = a plastoquinol + NAD(+) + n H(+)(out). The enzyme catalyses a plastoquinone + NADPH + (n+1) H(+)(in) = a plastoquinol + NADP(+) + n H(+)(out). NDH shuttles electrons from NAD(P)H:plastoquinone, via FMN and iron-sulfur (Fe-S) centers, to quinones in the photosynthetic chain and possibly in a chloroplast respiratory chain. The immediate electron acceptor for the enzyme in this species is believed to be plastoquinone. Couples the redox reaction to proton translocation, and thus conserves the redox energy in a proton gradient. The chain is NAD(P)H-quinone oxidoreductase subunit 5, chloroplastic (ndhF) from Pisum sativum (Garden pea).